A 312-amino-acid polypeptide reads, in one-letter code: Ribosomal RNA small subunit methyltransferase H (312 aa).

S-adenosyl-L-methionine is bound by residues 32–34, Asp-52, Phe-79, Asp-100, and Gln-107; that span reads AGH.

The protein belongs to the methyltransferase superfamily. RsmH family.

It localises to the cytoplasm. The catalysed reaction is cytidine(1402) in 16S rRNA + S-adenosyl-L-methionine = N(4)-methylcytidine(1402) in 16S rRNA + S-adenosyl-L-homocysteine + H(+). Specifically methylates the N4 position of cytidine in position 1402 (C1402) of 16S rRNA. The chain is Ribosomal RNA small subunit methyltransferase H from Listeria monocytogenes serotype 4b (strain CLIP80459).